Reading from the N-terminus, the 210-residue chain is Large ribosomal subunit protein uL4 (210 aa).

Part of the 50S ribosomal subunit. In terms of processing, the N-terminus is blocked.

One of the primary rRNA binding proteins, this protein initially binds near the 5'-end of the 23S rRNA. It is important during the early stages of 50S assembly. It makes multiple contacts with different domains of the 23S rRNA in the assembled 50S subunit and ribosome. Functionally, forms part of the polypeptide exit tunnel. In terms of biological role, this protein can be incorporated into E.coli ribosomes in vivo, which resulted in decreased peptidyltransferase (Ptase) activity of the hybrid ribosomes. The hybrid 50S subunits associate less well with 30S subunits to form the ribosome. The chain is Large ribosomal subunit protein uL4 (rplD) from Thermus thermophilus (strain ATCC 27634 / DSM 579 / HB8).